A 473-amino-acid chain; its full sequence is Pentatricopeptide repeat-containing protein At3g60050 (473 aa).

9 PPR repeats span residues 148–182, 183–217, 218–252, 253–287, 288–322, 323–357, 358–392, 393–427, and 428–462; these read TVNS…GFPT, TART…NYRP, FKHS…GFSP, DVLT…GFSP, DSYT…GIDP, SVLH…GCRP, DVVC…GQLP, NVFT…GCNP, and NFVV…GHYV.

The protein belongs to the PPR family. P subfamily.

This is Pentatricopeptide repeat-containing protein At3g60050 from Arabidopsis thaliana (Mouse-ear cress).